The sequence spans 48 residues: Bacteriocin plantaricin-A (48 aa).

The propeptide occupies 1 to 25 (MKIQIKGMKQLSNKEMQKIVGGKSS).

Active plantaricin A is composed of an alpha chain and a beta chain.

This heat stable bacteriocin inhibits the growth of closely related Lactobacillus species. It may act as a pore-forming protein, creating a channel in the cell membrane through a 'barrel stave' mechanism. This chain is Bacteriocin plantaricin-A (plnA), found in Lactiplantibacillus plantarum (strain ATCC BAA-793 / NCIMB 8826 / WCFS1) (Lactobacillus plantarum).